The sequence spans 59 residues: Large ribosomal subunit protein uL30 (59 aa).

This sequence belongs to the universal ribosomal protein uL30 family. As to quaternary structure, part of the 50S ribosomal subunit.

This Psychrobacter cryohalolentis (strain ATCC BAA-1226 / DSM 17306 / VKM B-2378 / K5) protein is Large ribosomal subunit protein uL30.